The primary structure comprises 140 residues: UPF0102 protein Ppro_1186 (140 aa).

The tract at residues 1–27 (MKRPGDGRQESPSSTARPDNRNTGSRG) is disordered. A compositionally biased stretch (polar residues) spans 10 to 25 (ESPSSTARPDNRNTGS).

The protein belongs to the UPF0102 family.

The polypeptide is UPF0102 protein Ppro_1186 (Pelobacter propionicus (strain DSM 2379 / NBRC 103807 / OttBd1)).